The following is a 744-amino-acid chain: Deleted in azoospermia protein 1 (744 aa).

Over residues Met1–Asn10 the composition is skewed to polar residues. The interval Met1–Ser27 is disordered. Positions Ser11–Ser27 are enriched in low complexity. In terms of domain architecture, RRM 1 spans Asn40–Arg115. A compositionally biased stretch (polar residues) spans Gln163 to Asn175. Residues Gln163–Ser192 are disordered. Residues Ser176 to Ser192 show a composition bias toward low complexity. The 76-residue stretch at Asn205–Arg280 folds into the RRM 2 domain. Residues Gln328–Asn340 show a composition bias toward polar residues. The segment at Gln328–Ser357 is disordered. A compositionally biased stretch (low complexity) spans Ser341–Ser357. Residues Asn370–Arg445 form the RRM 3 domain. 9 DAZ domains span residues Ala497–Gln520, Glu521–Gln544, Pro545–Gln568, Ala569–Gln592, Pro593–Gln616, Ala617–Gln640, Ala641–Gln664, Ala665–Gln688, and Ala689–Gln712.

This sequence belongs to the RRM DAZ family. As to quaternary structure, forms a heterodimer with BOLL and DAZL. Interacts with PUM2, DAZAP1, DAZAP2, DZIP1 and DZIP3. As to expression, testis-specific. Expression restricted to premeiotic germ cells, particularly in spermatogonia (at protein level).

The protein localises to the cytoplasm. It localises to the nucleus. Its function is as follows. RNA-binding protein that plays an essential role in spermatogenesis. May act by binding to the 3'-UTR of mRNAs and regulating their translation. Promotes germ-cell progression to meiosis and formation of haploid germ cells. In Homo sapiens (Human), this protein is Deleted in azoospermia protein 1 (DAZ1).